The primary structure comprises 443 residues: Serine/threonine-protein phosphatase 2A 55 kDa regulatory subunit B beta isoform (443 aa).

WD repeat units lie at residues 22–61, 87–128, 171–209, 220–260, 279–317, 334–375, and 410–443; these read TEADIISTVEFNPTGELLATGDKGGRVVVFQREQESKSQP, EIEE…KRPE, AHTYHINSISVNSDYETYMSTDDLRINLWNLEITNRSFN, ELTE…LCDN, EIISSISDVKFSHSGRYLMTRDYLTVKVWDINMESKPLE, ENDC…DVTL, and DFSKKILHTAWHPNENIIAVAATNNLYIFQDKVN.

The protein belongs to the phosphatase 2A regulatory subunit B family. In terms of assembly, PP2A consists of a common heterodimeric core enzyme, composed of a 36 kDa catalytic subunit (subunit C) and a 65 kDa constant regulatory subunit (PR65 or subunit A), that associates with a variety of regulatory subunits.

It is found in the cytoplasm. The protein resides in the cytoskeleton. The protein localises to the membrane. Its function is as follows. The B regulatory subunit might modulate substrate selectivity and catalytic activity, and might also direct the localization of the catalytic enzyme to a particular subcellular compartment. This Carassius auratus (Goldfish) protein is Serine/threonine-protein phosphatase 2A 55 kDa regulatory subunit B beta isoform (ppp2r2b).